The chain runs to 576 residues: Adenine deaminase (576 aa).

This sequence belongs to the metallo-dependent hydrolases superfamily. Adenine deaminase family. Mn(2+) is required as a cofactor.

It carries out the reaction adenine + H2O + H(+) = hypoxanthine + NH4(+). The polypeptide is Adenine deaminase (Bacillus pumilus (strain SAFR-032)).